We begin with the raw amino-acid sequence, 597 residues long: Centrosomal protein of 70 kDa (597 aa).

The segment at M1–Q24 is disordered. Coiled coils occupy residues M66 to V179 and T254 to I320. The stretch at N483–S516 is one TPR repeat.

As to quaternary structure, directly interacts with tubulin-gamma; this interaction determines centrosomal localization.

It is found in the cytoplasm. It localises to the cytoskeleton. The protein resides in the microtubule organizing center. Its subcellular location is the centrosome. Functionally, plays a role in the organization of both preexisting and nascent microtubules in interphase cells. During mitosis, required for the organization and orientation of the mitotic spindle. This chain is Centrosomal protein of 70 kDa (CEP70), found in Macaca fascicularis (Crab-eating macaque).